A 926-amino-acid polypeptide reads, in one-letter code: Translation initiation factor IF-2 (926 aa).

Disordered stretches follow at residues 1–185 (MTDS…EEVE) and 200–299 (EDKA…RRRG). Composition is skewed to low complexity over residues 13 to 24 (TGKKTLTLKPTG) and 70 to 96 (APAT…AAPQ). Positions 110–133 (TNQYSQQRHPGQQNRPQASSQPSR) are enriched in polar residues. The segment covering 151-185 (MDARRRALAEAQVREVEDAKRRAEEEVRRQAEEVE) has biased composition (basic and acidic residues). Residues 211–251 (APEPVAEPVAPVAETPRAADPAPRAPSPAGAKPAAGAPAPS) show a composition bias toward low complexity. The 168-residue stretch at 424 to 591 (SRPPVVTIMG…AVLLQAEILD (168 aa)) folds into the tr-type G domain. A G1 region spans residues 433–440 (GHVDHGKT). GTP is bound at residue 433–440 (GHVDHGKT). The tract at residues 458–462 (GITQH) is G2. The tract at residues 479–482 (DTPG) is G3. Residues 479–483 (DTPGH) and 533–536 (NKID) contribute to the GTP site. The G4 stretch occupies residues 533-536 (NKID). The tract at residues 569-571 (SAK) is G5.

The protein belongs to the TRAFAC class translation factor GTPase superfamily. Classic translation factor GTPase family. IF-2 subfamily.

Its subcellular location is the cytoplasm. In terms of biological role, one of the essential components for the initiation of protein synthesis. Protects formylmethionyl-tRNA from spontaneous hydrolysis and promotes its binding to the 30S ribosomal subunits. Also involved in the hydrolysis of GTP during the formation of the 70S ribosomal complex. In Allorhizobium ampelinum (strain ATCC BAA-846 / DSM 112012 / S4) (Agrobacterium vitis (strain S4)), this protein is Translation initiation factor IF-2.